The primary structure comprises 146 residues: Large ribosomal subunit protein bL19 (146 aa).

Residues 116–146 (ADRKRIDQDRAAERAAKEEAQKAQEPKASQE) are disordered. Positions 119 to 146 (KRIDQDRAAERAAKEEAQKAQEPKASQE) are enriched in basic and acidic residues.

As to quaternary structure, part of the 50S risobomal subunit. Contacts protein L14. Forms a bridge to the 30S subunit in the 70S ribosome, contacting the 16S rRNA.

Its function is as follows. Contacts the 16S rRNA of the 30S subunit (part of bridge B6), connecting the 2 subunits. This is Large ribosomal subunit protein bL19 (rplS) from Thermus thermophilus (strain ATCC 27634 / DSM 579 / HB8).